The primary structure comprises 554 residues: (+)-delta-cadinene synthase isozyme XC14 (554 aa).

The span at 1–16 (MASQVSQMPSSSPLSS) shows a compositional bias: low complexity. Residues 1–23 (MASQVSQMPSSSPLSSNKDEMRP) form a disordered region. 3 residues coordinate Mg(2+): Asp-307, Asp-311, and Asp-451. A DDXXD motif motif is present at residues 307-311 (DDTYD).

This sequence belongs to the terpene synthase family. Mg(2+) is required as a cofactor.

The catalysed reaction is (2E,6E)-farnesyl diphosphate = (1S,8aR)-delta-cadinene + diphosphate. It functions in the pathway secondary metabolite biosynthesis; terpenoid biosynthesis. In terms of biological role, responsible for the cyclization of trans,trans-farnesyl diphosphate (FPP) to (+)-delta cadinene. This Gossypium arboreum (Tree cotton) protein is (+)-delta-cadinene synthase isozyme XC14.